The chain runs to 246 residues: MAVRAQFENSNEVGVFSTLTNSYALVAVGASENFYSVFEAELQDVIPICRTTIAGTRIIGRLTAGNRKGLLVPTSTSDQELQHLRNSLPDDVRIQRIEERLSALGNVIVCNDHTALIHPDLERETEEIIADVLGVEVFRQTIADNVLVGSYMSLSNQGGLVHPKTSIQDQDELSSLLQVPLVAGSVNRGSNVIGGGMVVNDWMAVTGLDTTAPELSVIESVFRLGEGAAPGQINSSLKDTMVESFY.

S174 and S175 each carry phosphoserine; by CK1.

Belongs to the eIF-6 family. Monomer. Associates with the 60S ribosomal subunit. In terms of processing, phosphorylation at Ser-174 and Ser-175 promotes nuclear export.

It is found in the cytoplasm. The protein resides in the nucleus. The protein localises to the nucleolus. Binds to the 60S ribosomal subunit and prevents its association with the 40S ribosomal subunit to form the 80S initiation complex in the cytoplasm. Is also involved in ribosome biogenesis. Associates with pre-60S subunits in the nucleus and is involved in its nuclear export. This chain is Eukaryotic translation initiation factor 6, found in Sordaria macrospora (strain ATCC MYA-333 / DSM 997 / K(L3346) / K-hell).